The sequence spans 314 residues: MPTVNHSGTSHTVFHLLGIPGLQDQHMWISIPFFISYVTALLGNSLLIFIILTKRSLHEPMYLFLCMLAGADIVLSTCTIPQALAIFWFRAGDISLDRCITQLFFIHSTFISESGILLVMAFDHYIAICYPLRYTTILTNALIKKICVTVSLRSYGTIFPIIFLLKRLTFCQNNIIPHTFCEHIGLAKYACNDIRINIWYGFSILMSTVVLDVVLIFISYMLILHAVFHMPSPDACHKALNTFGSHVCIIILFYGSGIFTILTQRFGRHIPPCIHIPLANVCILAPPMLNPIIYGIKTKQIQEQVVQFLFIKQK.

Topologically, residues 1–27 are extracellular; sequence MPTVNHSGTSHTVFHLLGIPGLQDQHM. Asn-5 carries N-linked (GlcNAc...) asparagine glycosylation. Residues 28–48 form a helical membrane-spanning segment; it reads WISIPFFISYVTALLGNSLLI. The Cytoplasmic portion of the chain corresponds to 49–56; it reads FIILTKRS. A helical membrane pass occupies residues 57–77; sequence LHEPMYLFLCMLAGADIVLST. Topologically, residues 78–101 are extracellular; the sequence is CTIPQALAIFWFRAGDISLDRCIT. Cysteines 99 and 191 form a disulfide. A helical membrane pass occupies residues 102-122; it reads QLFFIHSTFISESGILLVMAF. The Cytoplasmic segment spans residues 123-141; it reads DHYIAICYPLRYTTILTNA. The chain crosses the membrane as a helical span at residues 142 to 162; it reads LIKKICVTVSLRSYGTIFPII. Over 163-198 the chain is Extracellular; sequence FLLKRLTFCQNNIIPHTFCEHIGLAKYACNDIRINI. The chain crosses the membrane as a helical span at residues 199-219; the sequence is WYGFSILMSTVVLDVVLIFIS. Residues 220–239 lie on the Cytoplasmic side of the membrane; the sequence is YMLILHAVFHMPSPDACHKA. A helical transmembrane segment spans residues 240-260; it reads LNTFGSHVCIIILFYGSGIFT. Residues 261-275 lie on the Extracellular side of the membrane; the sequence is ILTQRFGRHIPPCIH. A helical transmembrane segment spans residues 276-296; it reads IPLANVCILAPPMLNPIIYGI. The Cytoplasmic segment spans residues 297 to 314; that stretch reads KTKQIQEQVVQFLFIKQK.

Belongs to the G-protein coupled receptor 1 family.

It is found in the cell membrane. Its function is as follows. Odorant receptor. This is Olfactory receptor 52B4 (OR52B4) from Homo sapiens (Human).